We begin with the raw amino-acid sequence, 86 residues long: Small ribosomal subunit protein bS16 (86 aa).

It belongs to the bacterial ribosomal protein bS16 family.

The chain is Small ribosomal subunit protein bS16 from Thermoanaerobacter sp. (strain X514).